The sequence spans 595 residues: Phosphomethylpyrimidine synthase (595 aa).

Over residues 97–120 the composition is skewed to basic and acidic residues; the sequence is GRDVRPEDNGFTKDDDPRAAREVF. Positions 97 to 134 are disordered; the sequence is GRDVRPEDNGFTKDDDPRAAREVFPRTSSHKPLRAKKG. The span at 124–133 shows a compositional bias: basic residues; sequence SSHKPLRAKK. Substrate is bound by residues Asn202, Met231, Tyr260, His296, 316–318, 357–360, and Glu396; these read SRG and DGLR. His400 lines the Zn(2+) pocket. Residue Tyr423 participates in substrate binding. His464 is a binding site for Zn(2+). [4Fe-4S] cluster contacts are provided by Cys544, Cys547, and Cys552.

This sequence belongs to the ThiC family. [4Fe-4S] cluster serves as cofactor.

It catalyses the reaction 5-amino-1-(5-phospho-beta-D-ribosyl)imidazole + S-adenosyl-L-methionine = 4-amino-2-methyl-5-(phosphooxymethyl)pyrimidine + CO + 5'-deoxyadenosine + formate + L-methionine + 3 H(+). The protein operates within cofactor biosynthesis; thiamine diphosphate biosynthesis. Its function is as follows. Catalyzes the synthesis of the hydroxymethylpyrimidine phosphate (HMP-P) moiety of thiamine from aminoimidazole ribotide (AIR) in a radical S-adenosyl-L-methionine (SAM)-dependent reaction. This Halalkalibacterium halodurans (strain ATCC BAA-125 / DSM 18197 / FERM 7344 / JCM 9153 / C-125) (Bacillus halodurans) protein is Phosphomethylpyrimidine synthase.